A 734-amino-acid chain; its full sequence is Adhesion G protein-coupled receptor E5 (734 aa).

A signal peptide spans 1–26; the sequence is MGGPHGGPFLLFHVLCFLLTLSEVGS. Topologically, residues 27 to 449 are extracellular; the sequence is QNSKACALPC…VEDPKLALIT (423 aa). The region spanning 28 to 70 is the EGF-like 1 domain; it reads NSKACALPCPPNSSCVNGTACRCAPGFISFSGEIFTDPLESCD. 9 cysteine pairs are disulfide-bonded: Cys-32-Cys-42, Cys-36-Cys-48, Cys-50-Cys-69, Cys-75-Cys-89, Cys-83-Cys-98, Cys-100-Cys-121, Cys-127-Cys-140, Cys-134-Cys-149, and Cys-151-Cys-170. Asn-39 and Asn-44 each carry an N-linked (GlcNAc...) asparagine glycan. Residues 71–122 form the EGF-like 2; calcium-binding domain; sequence DINECGPPSPVDCGSSADCQNTEGGYYCTCSPGYEPVSGAMIFRNESENTCR. Residues Asn-115 and Asn-136 are each glycosylated (N-linked (GlcNAc...) asparagine). Positions 123-171 constitute an EGF-like 3; calcium-binding domain; it reads DVDECSSGQHQCHNSTVCFNTVGSYTCHCREGWEPKHGLKNKQKDTICK. The GAIN-B domain occupies 265–441; that stretch reads TYRSLDNTEL…AILMAHYDVE (177 aa). N-linked (GlcNAc...) asparagine glycosylation is found at Asn-285, Asn-327, Asn-372, Asn-403, and Asn-418. Disulfide bonds link Cys-393–Cys-423 and Cys-411–Cys-425. The segment at 393–441 is GPS; sequence CAFWKKDSNGNGSWATTGCWKMGRGNGSITCQCSHLSSFAILMAHYDVE. Residues 450–470 form a helical membrane-spanning segment; sequence KVGLALSLACLLLCILTFLLV. The Cytoplasmic portion of the chain corresponds to 471–478; sequence RPIQGSRT. Residues 479–499 traverse the membrane as a helical segment; the sequence is TVHLHLCICLFVGSAIFLAGI. The Extracellular segment spans residues 500 to 519; that stretch reads ENEGGEVGTRCRLVAVLLHY. Residues 520–540 form a helical membrane-spanning segment; it reads CFLAAFCWMSLEGVELYFLVV. Topologically, residues 541–550 are cytoplasmic; the sequence is RVFQGQGMRK. A helical transmembrane segment spans residues 551 to 571; sequence LWLCLIGYGVPLIIVGISAGA. Residues 572–593 are Extracellular-facing; sequence YSKGYGREKFCWLNFEGGFLWS. A helical membrane pass occupies residues 594–614; the sequence is FVGPVTFIVLGNAIIFVITVW. Residues 615 to 637 are Cytoplasmic-facing; the sequence is KLTQKFSEINPDIKKLKKARVLT. Residues 638–658 traverse the membrane as a helical segment; it reads ITAIAQLFVLGCTWVFGLLLF. Over 659-662 the chain is Extracellular; the sequence is NPES. A helical transmembrane segment spans residues 663–683; sequence WVLSYIFSILNCLQGFFLFVL. At 684–734 the chain is on the cytoplasmic side; it reads YCLLNKKVREEYRKWACMVAGNKYSEFATTTSGSGSSHNQTQALRPSESGM. The segment at 712–734 is disordered; sequence TTTSGSGSSHNQTQALRPSESGM. At Thr-713 the chain carries Phosphothreonine. Position 715 is a phosphoserine (Ser-715). Position 724 is a phosphothreonine (Thr-724). A phosphoserine mark is found at Ser-730 and Ser-732.

It belongs to the G-protein coupled receptor 2 family. LN-TM7 subfamily. Forms a heterodimer, consisting of a large extracellular region (alpha subunit) non-covalently linked to a seven-transmembrane moiety (beta subunit). Interacts with complement decay-accelerating factor (DAF) and with chondroitin sulfate. Proteolytically cleaved into 2 subunits, an extracellular alpha subunit and a seven-transmembrane subunit.

The protein resides in the cell membrane. Its subcellular location is the secreted. It localises to the extracellular space. Its function is as follows. Receptor potentially involved in both adhesion and signaling processes early after leukocyte activation. Plays an essential role in leukocyte migration. The chain is Adhesion G protein-coupled receptor E5 from Bos taurus (Bovine).